The following is a 232-amino-acid chain: MLKLTDITWLYHHLPMRFSLTVERGEQVAILGPSGAGKSTLLNLIAGFLTPASGLLTIDDVDHTTTPPSRRPVSMLFQENNLFSHLTVAQNIGLGLNPGLKLNAAQQKKMHAIAHQMGIDNLMARLPGELSGGQRQRVALARCLVREQPILLLDEPFSALDPALRQEMLTLVSSSCQQQKMTLLMVSHSVEDAARIATRSVVVADGRIAWQGKTDELLSGKASASALLGIKG.

The region spanning 2 to 230 (LKLTDITWLY…KASASALLGI (229 aa)) is the ABC transporter domain. ATP is bound at residue 32–39 (GPSGAGKS).

This sequence belongs to the ABC transporter superfamily. Thiamine importer (TC 3.A.1.19.1) family. The complex is composed of two ATP-binding proteins (ThiQ), two transmembrane proteins (ThiP) and a solute-binding protein (ThiB).

The protein localises to the cell inner membrane. It carries out the reaction thiamine(out) + ATP + H2O = thiamine(in) + ADP + phosphate + H(+). Functionally, part of the ABC transporter complex ThiBPQ involved in thiamine import. Responsible for energy coupling to the transport system. The chain is Thiamine import ATP-binding protein ThiQ from Escherichia coli (strain UTI89 / UPEC).